A 91-amino-acid polypeptide reads, in one-letter code: Probable Fe(2+)-trafficking protein (91 aa).

Belongs to the Fe(2+)-trafficking protein family.

In terms of biological role, could be a mediator in iron transactions between iron acquisition and iron-requiring processes, such as synthesis and/or repair of Fe-S clusters in biosynthetic enzymes. This chain is Probable Fe(2+)-trafficking protein, found in Cupriavidus metallidurans (strain ATCC 43123 / DSM 2839 / NBRC 102507 / CH34) (Ralstonia metallidurans).